Here is a 125-residue protein sequence, read N- to C-terminus: Small ribosomal subunit protein uS12 (125 aa).

Residue D89 is modified to 3-methylthioaspartic acid.

The protein belongs to the universal ribosomal protein uS12 family. As to quaternary structure, part of the 30S ribosomal subunit. Contacts proteins S8 and S17. May interact with IF1 in the 30S initiation complex.

Its function is as follows. With S4 and S5 plays an important role in translational accuracy. Functionally, interacts with and stabilizes bases of the 16S rRNA that are involved in tRNA selection in the A site and with the mRNA backbone. Located at the interface of the 30S and 50S subunits, it traverses the body of the 30S subunit contacting proteins on the other side and probably holding the rRNA structure together. The combined cluster of proteins S8, S12 and S17 appears to hold together the shoulder and platform of the 30S subunit. In Clostridium novyi (strain NT), this protein is Small ribosomal subunit protein uS12.